Reading from the N-terminus, the 368-residue chain is Ankyrin repeat domain-containing protein 40 (368 aa).

The residue at position 1 (methionine 1) is an N-acetylmethionine. 2 ANK repeats span residues glutamate 9–serine 38 and asparagine 43–isoleucine 72. 3 disordered regions span residues methionine 93 to serine 115, aspartate 139 to proline 176, and isoleucine 196 to tyrosine 238. The segment covering valine 95–asparagine 107 has biased composition (acidic residues). Residues serine 149 to proline 169 are compositionally biased toward pro residues. Polar residues predominate over residues proline 212–proline 224.

The polypeptide is Ankyrin repeat domain-containing protein 40 (ANKRD40) (Homo sapiens (Human)).